Reading from the N-terminus, the 298-residue chain is N-acetylmuramic acid 6-phosphate etherase (298 aa).

Positions 55 to 218 constitute an SIS domain; it reads IHAQVSGGGR…STGLMIKSGK (164 aa). The active-site Proton donor is the Glu83. The active site involves Glu114.

This sequence belongs to the GCKR-like family. MurNAc-6-P etherase subfamily. Homodimer.

It carries out the reaction N-acetyl-D-muramate 6-phosphate + H2O = N-acetyl-D-glucosamine 6-phosphate + (R)-lactate. It participates in amino-sugar metabolism; 1,6-anhydro-N-acetylmuramate degradation. The protein operates within amino-sugar metabolism; N-acetylmuramate degradation. Its pathway is cell wall biogenesis; peptidoglycan recycling. In terms of biological role, specifically catalyzes the cleavage of the D-lactyl ether substituent of MurNAc 6-phosphate, producing GlcNAc 6-phosphate and D-lactate. Together with AnmK, is also required for the utilization of anhydro-N-acetylmuramic acid (anhMurNAc) either imported from the medium or derived from its own cell wall murein, and thus plays a role in cell wall recycling. This Shigella flexneri serotype 5b (strain 8401) protein is N-acetylmuramic acid 6-phosphate etherase.